The chain runs to 1300 residues: Serine protease EspP (1300 aa).

An N-terminal signal peptide occupies residues M1 to A55. The region spanning Q57–N311 is the Peptidase S6 domain. Residues H127, D156, and S263 each act as charge relay system in the active site. An Autotransporter domain is found at D1034–F1300.

Post-translationally, cleaved to release the mature protein from the outer membrane.

It localises to the periplasm. It is found in the secreted. The protein resides in the cell surface. The protein localises to the cell outer membrane. With respect to regulation, inhibition of cytotoxic activity by phenylmethylsulfonyl fluoride. In terms of biological role, serine protease capable of cleaving pepsin A and human coagulation factor V, which may contribute to the mucosal hemorrhage observed in hemorrhagic colitis. The sequence is that of Serine protease EspP (espP) from Escherichia coli O157:H7.